A 290-amino-acid chain; its full sequence is Signal recognition particle receptor subunit beta (290 aa).

The helical transmembrane segment at 44–64 (VLLLALFTLIFIIIISKLFGS) threads the bilayer. Residues 92–100 (GLSNAGKTA), 114–117 (THTS), glycine 140, and alanine 268 each bind GTP.

Belongs to the SRP receptor beta subunit family. Heterodimer of an alpha and a beta chain.

The protein resides in the endoplasmic reticulum membrane. Functionally, component of the signal recognition particle (SRP) complex receptor (SR). Ensures, in conjunction with the SRP complex, the correct targeting of the nascent secretory proteins to the endoplasmic reticulum membrane system. May mediate the membrane association of SR. This is Signal recognition particle receptor subunit beta (srprb) from Dictyostelium discoideum (Social amoeba).